Reading from the N-terminus, the 250-residue chain is 2,3-bisphosphoglycerate-dependent phosphoglycerate mutase (250 aa).

Substrate is bound by residues 8–15 (RHGESTWN), 21–22 (TG), arginine 60, 87–90 (ERHY), lysine 98, and 114–115 (RR). The active-site Tele-phosphohistidine intermediate is the histidine 9. Catalysis depends on glutamate 87, which acts as the Proton donor/acceptor. Residues 116-135 (SYDTPPPPLAANDPRSERSD) form a disordered region. Position 183 to 184 (183 to 184 (GN)) interacts with substrate.

This sequence belongs to the phosphoglycerate mutase family. BPG-dependent PGAM subfamily. As to quaternary structure, homodimer.

It carries out the reaction (2R)-2-phosphoglycerate = (2R)-3-phosphoglycerate. It functions in the pathway carbohydrate degradation; glycolysis; pyruvate from D-glyceraldehyde 3-phosphate: step 3/5. In terms of biological role, catalyzes the interconversion of 2-phosphoglycerate and 3-phosphoglycerate. The polypeptide is 2,3-bisphosphoglycerate-dependent phosphoglycerate mutase (Polaromonas naphthalenivorans (strain CJ2)).